A 301-amino-acid chain; its full sequence is Pyridoxal 5'-phosphate synthase subunit PdxS (301 aa).

Asp31 serves as a coordination point for D-ribose 5-phosphate. The active-site Schiff-base intermediate with D-ribose 5-phosphate is Lys88. Residue Gly160 coordinates D-ribose 5-phosphate. Lys172 provides a ligand contact to D-glyceraldehyde 3-phosphate. D-ribose 5-phosphate contacts are provided by residues Gly221 and 242 to 243; that span reads GS.

This sequence belongs to the PdxS/SNZ family. As to quaternary structure, in the presence of PdxT, forms a dodecamer of heterodimers.

It carries out the reaction aldehydo-D-ribose 5-phosphate + D-glyceraldehyde 3-phosphate + L-glutamine = pyridoxal 5'-phosphate + L-glutamate + phosphate + 3 H2O + H(+). It participates in cofactor biosynthesis; pyridoxal 5'-phosphate biosynthesis. Functionally, catalyzes the formation of pyridoxal 5'-phosphate from ribose 5-phosphate (RBP), glyceraldehyde 3-phosphate (G3P) and ammonia. The ammonia is provided by the PdxT subunit. Can also use ribulose 5-phosphate and dihydroxyacetone phosphate as substrates, resulting from enzyme-catalyzed isomerization of RBP and G3P, respectively. The protein is Pyridoxal 5'-phosphate synthase subunit PdxS of Methanosarcina acetivorans (strain ATCC 35395 / DSM 2834 / JCM 12185 / C2A).